Reading from the N-terminus, the 233-residue chain is Ribonuclease 3 (233 aa).

In terms of domain architecture, RNase III spans 4 to 126 (LNKLMERLGH…IVGAIYIDAG (123 aa)). Residue E39 participates in Mg(2+) binding. D43 is a catalytic residue. Positions 112 and 115 each coordinate Mg(2+). E115 is an active-site residue. The DRBM domain occupies 153-222 (DAKSLLQEWL…AKRFLELLDD (70 aa)).

This sequence belongs to the ribonuclease III family. In terms of assembly, homodimer. Mg(2+) serves as cofactor.

It localises to the cytoplasm. The catalysed reaction is Endonucleolytic cleavage to 5'-phosphomonoester.. Its function is as follows. Digests double-stranded RNA. Involved in the processing of primary rRNA transcript to yield the immediate precursors to the large and small rRNAs (23S and 16S). Processes some mRNAs, and tRNAs when they are encoded in the rRNA operon. Processes pre-crRNA and tracrRNA of type II CRISPR loci if present in the organism. The chain is Ribonuclease 3 from Coxiella burnetii (strain Dugway 5J108-111).